A 328-amino-acid polypeptide reads, in one-letter code: MPLHNLTRFPRLEFIGAPTPLEYLPRFSDYLGREIFIKRDDVTPMAMGGNKLRKLEFLAADALREGADTLITAGAIQSNHVRQTAAVAAKLGLHCVALLENPIGTTAENYLTNGNRLLLDLFNTQIEMCDALTDPNAQLEVLATRVEAQGFRPYVIPVGGSNALGALGYVESALEIAQQCEGAVNISSVVVASGSAGTHAGLAVGLEHLMPESELIGVTVSRSVADQLPKVVNLQQAIAKELELTASAEILLWDDYFAPGYGVPNDEGMEAVKLLARLEGILLDPVYTGKAMAGLIDGISQKRFKDEGPILFIHTGGAPALFAYHPHV.

Lys51 carries the post-translational modification N6-(pyridoxal phosphate)lysine.

This sequence belongs to the ACC deaminase/D-cysteine desulfhydrase family. As to quaternary structure, homodimer. Requires pyridoxal 5'-phosphate as cofactor.

The catalysed reaction is D-cysteine + H2O = hydrogen sulfide + pyruvate + NH4(+) + H(+). Functionally, catalyzes the alpha,beta-elimination reaction of D-cysteine and of several D-cysteine derivatives. It could be a defense mechanism against D-cysteine. The sequence is that of D-cysteine desulfhydrase from Escherichia coli O6:H1 (strain CFT073 / ATCC 700928 / UPEC).